We begin with the raw amino-acid sequence, 150 residues long: NmrA-like family domain-containing protein 1 (150 aa).

NADP(+) contacts are provided by residues 7 to 12, 33 to 37, and Lys71; these read GATGAQ and RNPEQ.

The protein belongs to the NmrA-type oxidoreductase family. Homodimer. Interacts with ASS1. Interaction is enhanced by low NADPH/NADP(+) ratios, which results in inhibition of ASS1 activity.

The protein resides in the cytoplasm. It is found in the perinuclear region. The protein localises to the nucleus. Functionally, redox sensor protein. Undergoes restructuring and subcellular redistribution in response to changes in intracellular NADPH/NADP(+) levels. At low NADPH concentrations the protein is found mainly as a monomer, and binds argininosuccinate synthase (ASS1), the enzyme involved in nitric oxide synthesis. Association with ASS1 impairs its activity and reduces the production of nitric oxide, which subsecuently prevents apoptosis. Under normal NADPH concentrations, the protein is found as a dimer and hides the binding site for ASS1. The homodimer binds one molecule of NADPH. Has higher affinity for NADPH than for NADP(+). Binding to NADPH is necessary to form a stable dimer. This is NmrA-like family domain-containing protein 1 from Rattus norvegicus (Rat).